We begin with the raw amino-acid sequence, 266 residues long: Putative peptidyl-prolyl cis-trans isomerase NifM (266 aa).

Positions Pro124–Ala221 constitute a PpiC domain.

Belongs to the PpiC/parvulin rotamase family.

The enzyme catalyses [protein]-peptidylproline (omega=180) = [protein]-peptidylproline (omega=0). Functionally, required for the activation and stabilization of the iron-component (NifH) of nitrogenase. Probable PPIase. In Klebsiella oxytoca, this protein is Putative peptidyl-prolyl cis-trans isomerase NifM (nifM).